The chain runs to 192 residues: Cytochrome b-245 light chain (192 aa).

Topologically, residues 2-7 are cytoplasmic; the sequence is GQIEWA. Residues 8-30 traverse the membrane as a helical segment; sequence MWANEQALASGLILITGGIVATA. At 31–35 the chain is on the extracellular side; sequence GQFAQ. A helical transmembrane segment spans residues 36–53; sequence WYLGAYSIAAGVLICLLE. Over 54–69 the chain is Cytoplasmic; sequence YPRGKRSKGSTMERCG. An intramembrane segment occupies 70–80; it reads QKYLTRAVKVF. Topologically, residues 81 to 86 are cytoplasmic; that stretch reads GPLTSN. A helical transmembrane segment spans residues 87-104; it reads YYIRAFLHLGLSVPAGFL. Position 105 (Leu105) is a topological domain, extracellular. The helical transmembrane segment at 106 to 126 threads the bilayer; the sequence is ATILGTACLAIASSIYLLAAI. Residues 127–192 lie on the Cytoplasmic side of the membrane; sequence HGEHWTPIET…NPMPVTDEVV (66 aa). Positions 134–192 are disordered; that stretch reads IETKPKERPQVGGTIKQPPSNPPPRPPAEARKKPSEEEVAGVPGGGPQENPMPVTDEVV. At Thr147 the chain carries Phosphothreonine. Lys149 participates in a covalent cross-link: Glycyl lysine isopeptide (Lys-Gly) (interchain with G-Cter in ubiquitin). Phosphoserine is present on Ser168.

The protein belongs to the p22phox family. Component of the phagocyte NADPH oxidase core complex/cytochrome b558 complex, composed of CYBB (heavy chain (beta)) and CYBA (light chain (alpha)). Component of the phagocyte NADPH oxidase complex composed of an obligatory core heterodimer formed by the membrane proteins CYBA and CYBB and the cytosolic regulatory subunits NCF1/p47-phox, NCF2/p67-phox, NCF4/p40-phox and the small GTPase RAC1 or RAC2. Interacts with NCF1 (via SH3 domain). Interacts with SH3PXD2A. Interacts with DUOX1, DUOX2 and TPO. Interacts with NOX4; this interaction mediates superoxide generation. Interacts with calprotectin (S100A8/9). Interacts with GBP7. Interacts with NOXO1. Forms a heterodimer with NOX3 and is essential for activity and cell membrane localization of NOX3. Interacts with NOX1. Post-translationally, phosphorylation at Thr-147 enhances NADPH oxidase activity by promoting NCF1/p47-phox binding. In terms of processing, ubiquitinated at Lys-149 likely by RNF145.

Its subcellular location is the cell membrane. Functionally, subunit of NADPH oxidase complexes that is required for the NADPH oxidase activity that generates, in various cell types, superoxide from molecular oxygen utilizing NADPH as an electron donor. Subunit of the phagocyte NADPH oxidase complex that mediates the transfer of electrons from cytosolic NADPH to O2 to produce the superoxide anion (O2(-)). In the activated complex, electrons are first transferred from NADPH to flavin adenine dinucleotide (FAD) and subsequently transferred via two heme molecules to molecular oxygen, producing superoxide through an outer-sphere reaction. Activation of the NADPH oxidase complex is initiated by the assembly of cytosolic subunits of the NADPH oxidase complex with the core NADPH oxidase complex to form a complex at the plasma membrane or phagosomal membrane. This activation process is initiated by phosphorylation dependent binding of the cytosolic NCF1/p47-phox subunit to the C-terminus of CYBA/p22-phox. Aassociates with NOX3 to form a functional NADPH oxidase constitutively generating superoxide. In Tursiops truncatus (Atlantic bottle-nosed dolphin), this protein is Cytochrome b-245 light chain.